The chain runs to 1060 residues: Carbamoyl phosphate synthase large chain (1060 aa).

A carboxyphosphate synthetic domain region spans residues 1–401 (MPKRTDIRKI…SLLKACRSLE (401 aa)). Residues Arg129, Arg169, Gly175, Gly176, Arg208, Ile210, Glu215, Gly241, Ile242, His243, Gln284, and Glu298 each coordinate ATP. The ATP-grasp 1 domain occupies 133-327 (KQLMEELNQP…IAKLAAKIAV (195 aa)). Mg(2+) contacts are provided by Gln284, Glu298, and Asn300. Positions 284, 298, and 300 each coordinate Mn(2+). The segment at 402–546 (IGVDHIKIAD…YSTYAVENES (145 aa)) is oligomerization domain. The tract at residues 547-929 (LISDKASILV…ALYKAFEAAY (383 aa)) is carbamoyl phosphate synthetic domain. Residues 671–861 (EATLQALNIP…MAQVATKVIL (191 aa)) enclose the ATP-grasp 2 domain. ATP-binding residues include Arg707, Ala746, Leu748, Glu752, Gly777, Val778, His779, Ser780, Gln820, and Glu832. Residues Gln820, Glu832, and Asn834 each contribute to the Mg(2+) site. Gln820, Glu832, and Asn834 together coordinate Mn(2+). In terms of domain architecture, MGS-like spans 930–1060 (LHMPDYGNIV…SRAFTLKVLD (131 aa)). The interval 930–1060 (LHMPDYGNIV…SRAFTLKVLD (131 aa)) is allosteric domain.

Belongs to the CarB family. As to quaternary structure, composed of two chains; the small (or glutamine) chain promotes the hydrolysis of glutamine to ammonia, which is used by the large (or ammonia) chain to synthesize carbamoyl phosphate. Tetramer of heterodimers (alpha,beta)4. Requires Mg(2+) as cofactor. The cofactor is Mn(2+).

It carries out the reaction hydrogencarbonate + L-glutamine + 2 ATP + H2O = carbamoyl phosphate + L-glutamate + 2 ADP + phosphate + 2 H(+). It catalyses the reaction hydrogencarbonate + NH4(+) + 2 ATP = carbamoyl phosphate + 2 ADP + phosphate + 2 H(+). The protein operates within amino-acid biosynthesis; L-arginine biosynthesis; carbamoyl phosphate from bicarbonate: step 1/1. Its pathway is pyrimidine metabolism; UMP biosynthesis via de novo pathway; (S)-dihydroorotate from bicarbonate: step 1/3. In terms of biological role, large subunit of the glutamine-dependent carbamoyl phosphate synthetase (CPSase). CPSase catalyzes the formation of carbamoyl phosphate from the ammonia moiety of glutamine, carbonate, and phosphate donated by ATP, constituting the first step of 2 biosynthetic pathways, one leading to arginine and/or urea and the other to pyrimidine nucleotides. The large subunit (synthetase) binds the substrates ammonia (free or transferred from glutamine from the small subunit), hydrogencarbonate and ATP and carries out an ATP-coupled ligase reaction, activating hydrogencarbonate by forming carboxy phosphate which reacts with ammonia to form carbamoyl phosphate. This Streptococcus agalactiae serotype III (strain NEM316) protein is Carbamoyl phosphate synthase large chain.